Consider the following 453-residue polypeptide: Aldehyde dehydrogenase, dimeric NADP-preferring (453 aa).

Serine 2 carries the N-acetylserine modification. The residue at position 178 (lysine 178) is an N6-acetyllysine. Position 188-193 (188-193 (GSTAVG)) interacts with NAD(+). Residue lysine 194 is modified to N6-acetyllysine. Catalysis depends on residues glutamate 210 and cysteine 244.

This sequence belongs to the aldehyde dehydrogenase family. As to quaternary structure, homodimer. In terms of tissue distribution, constitutively expressed in cornea, stomach, skin, bladder and lungs. Lowest expression levels in lungs and bladder.

It is found in the cytoplasm. It catalyses the reaction an aldehyde + NAD(+) + H2O = a carboxylate + NADH + 2 H(+). It carries out the reaction octanal + NAD(+) + H2O = octanoate + NADH + 2 H(+). ALDHs play a major role in the detoxification of alcohol-derived acetaldehyde. They are involved in the metabolism of corticosteroids, biogenic amines, neurotransmitters, and lipid peroxidation. Oxidizes medium and long chain aldehydes into non-toxic fatty acids. Preferentially oxidizes aromatic aldehyde substrates. Comprises about 50 percent of corneal epithelial soluble proteins. May play a role in preventing corneal damage caused by ultraviolet light. The polypeptide is Aldehyde dehydrogenase, dimeric NADP-preferring (Aldh3a1) (Mus musculus (Mouse)).